Consider the following 244-residue polypeptide: tRNA pseudouridine synthase A (244 aa).

The active-site Nucleophile is aspartate 53. Tyrosine 111 is a substrate binding site.

Belongs to the tRNA pseudouridine synthase TruA family. In terms of assembly, homodimer.

It catalyses the reaction uridine(38/39/40) in tRNA = pseudouridine(38/39/40) in tRNA. Formation of pseudouridine at positions 38, 39 and 40 in the anticodon stem and loop of transfer RNAs. In Bacillus sp. (strain KSM-64), this protein is tRNA pseudouridine synthase A.